The sequence spans 475 residues: Putative response regulator NtrX-like (475 aa).

Residues 5-121 (DVLIVDDEES…KLVILLKRAC (117 aa)) form the Response regulatory domain. Aspartate 54 bears the 4-aspartylphosphate mark. Positions 143-369 (LVGGCSVTLK…LRNVVEWTLI (227 aa)) constitute a Sigma-54 factor interaction domain. Residues 171-178 (GKVGSGKE) and 232-241 (ANNGTLYIDE) each bind ATP.

Its function is as follows. Member of the two-component regulatory system RF_0895/RF_0427. This is Putative response regulator NtrX-like from Rickettsia felis (strain ATCC VR-1525 / URRWXCal2) (Rickettsia azadi).